The following is a 964-amino-acid chain: MIVQRTAAPTGSVPPDRHAARPFIPRMIRTFAVPIILGWLVTIAVLNVTVPQLETVGQIQAVSMSPDAAPSMISMKHIGKVFEEGDSDSAAMIVLEGQRPLGDAAHAFYDQMIGRLQADTTHVQSLQDFWGDPLTATGAQSSDGKAAYVQVKLAGNQGESLANESVEAVKTIVERLAPPPGVKVYVTGSAALVADQQQAGDRSLQVIEAVTFTVIIVMLLLVYRSIITSAIMLTMVVLGLLATRGGVAFLGFHRIIGLSTFATNLLVVLAIAAATDYAIFLIGRYQEARGLGQDRESAYYTMFGGTAHVVLGSGLTIAGATFCLSFTRLPYFQTLGVPLAIGMVIVVAAALTLGPAIIAVTSRFGKLLEPKRMARVRGWRKVGAAIVRWPGPILVGAVALALVGLLTLPGYRTNYNDRNYLPADLPANEGYAAAERHFSQARMNPEVLMVESDHDMRNSADFLVINKIAKAIFAVEGISRVQAITRPDGKPIEHTSIPFLISMQGTSQKLTEKYNQDLTARMLEQVNDIQSNIDQMERMHSLTQQMADVTHEMVIQMTGMVVDVEELRNHIADFDDFFRPIRSYFYWEKHCYDIPVCWSLRSVFDTLDGIDVMTEDINNLLPLMQRLDTLMPQLTAMMPEMIQTMKSMKAQMLSMHSTQEGLQDQMAAMQEDSAAMGEAFDASRNDDSFYLPPEVFDNPDFQRGLEQFLSPDGHAVRFIISHEGDPMSQAGIARIAKIKTAAKEAIKGTPLEGSAIYLGGTAAMFKDLSDGNTYDLMIAGISALCLIFIIMLITTRSVVAAAVIVGTVVLSLGASFGLSVLIWQHILGIELHWLVLAMAVIILLAVGADYNLLLVARLKEEIHAGINTGIIRAMGGSGSVVTAAGLVFAFTMMSFAVSELTVMAQVGTTIGMGLLFDTLIVRSFMTPSIAALLGKWFWWPQVVRQRPVPQPWPSPASARTFALV.

12 consecutive transmembrane segments (helical) span residues 31–51, 203–223, 230–250, 255–275, 302–322, 340–360, 389–409, 773–793, 803–823, 826–846, 880–900, and 923–943; these read FAVP…VTVP, SLQV…LLVY, AIML…VAFL, IIGL…AAAT, MFGG…GATF, AIGM…IIAV, WPGP…LTLP, TYDL…IMLI, VIVG…VLIW, ILGI…LLAV, VVTA…VSEL, and SFMT…PQVV.

It belongs to the resistance-nodulation-cell division (RND) (TC 2.A.6) family. MmpL subfamily. As to quaternary structure, interacts with MmpS5.

It localises to the cell inner membrane. Part of an export system, which is required for biosynthesis and secretion of siderophores. In Mycobacterium tuberculosis (strain CDC 1551 / Oshkosh), this protein is Siderophore exporter MmpL5 (mmpL5).